The following is a 178-amino-acid chain: Large ribosomal subunit protein uL6 (178 aa).

The protein belongs to the universal ribosomal protein uL6 family. As to quaternary structure, part of the 50S ribosomal subunit.

This protein binds to the 23S rRNA, and is important in its secondary structure. It is located near the subunit interface in the base of the L7/L12 stalk, and near the tRNA binding site of the peptidyltransferase center. This Shouchella clausii (strain KSM-K16) (Alkalihalobacillus clausii) protein is Large ribosomal subunit protein uL6.